We begin with the raw amino-acid sequence, 418 residues long: Protein-lysine 6-oxidase (418 aa).

Residues 1 to 20 (MRFAWTALLGSLQLCALVRC) form the signal peptide. A propeptide spans 21–169 (APPAASHRQP…NRVEVDGMVG (149 aa)) (removed by BMP1). The segment at 63–84 (YQPQRRRDPGATAPGAANATAP) is disordered. The span at 72 to 84 (GATAPGAANATAP) shows a compositional bias: low complexity. Asparagine 80, asparagine 96, and asparagine 143 each carry an N-linked (GlcNAc...) asparagine glycan. The segment at 130 to 175 (TSGAHDAGTSRADNQTAPGEVPTLSNLRPPNRVEVDGMVGDDPYNP) is disordered. Polar residues predominate over residues 140–157 (RADNQTAPGEVPTLSNLR). Residue tyrosine 188 is modified to Sulfotyrosine. A lysyl-oxidase like region spans residues 214 to 418 (PDLVPDPYYI…YASGCTISPY (205 aa)). 5 cysteine pairs are disulfide-bonded: cysteine 239–cysteine 245, cysteine 292–cysteine 341, cysteine 325–cysteine 331, cysteine 352–cysteine 362, and cysteine 399–cysteine 413. Residues histidine 293, histidine 295, and histidine 297 each contribute to the Cu cation site. Positions 321-356 (KASFCLEDTSCDYGYHRRFACTAHTQGLSPGCYDTY) form a cross-link, lysine tyrosylquinone (Lys-Tyr). Tyrosine 356 carries the 2',4',5'-topaquinone modification.

The protein belongs to the lysyl oxidase family. Interacts with MFAP4. Interacts (via propeptide) with EFEMP2; this interaction is strong and facilitates formation of ternary complexes with ELN during elastic fiber assembly; this interaction limits interaction of EFEMP2 with FBLN5. The cofactor is Cu cation. Lysine tyrosylquinone residue is required as a cofactor. In terms of processing, the lysine tyrosylquinone cross-link (LTQ) is generated by condensation of the epsilon-amino group of a lysine with a topaquinone produced by oxidation of tyrosine. Post-translationally, proteolytically cleaved by BMP1 which removes the propeptide. Also proteolytically cleaved by ADAMTS2 and ADAMTS14, but not by ADAMTS3, at an additional cleavage site downstream of the BMP1 cleavage site. The propeptide plays a role in directing the deposition of this enzyme to elastic fibers, via interaction with tropoelastin. Cleavage by BMP1 to remove the propeptide does not increase enzymatic activity but increases binding to collagen. Cleavage by ADAMTS2 produces a form with reduced collagen-binding activity. Sulfated at Tyr-188 and also at either Tyr-184 or Tyr-185 which enhances binding to collagen.

It localises to the secreted. Its subcellular location is the extracellular space. The enzyme catalyses L-lysyl-[protein] + O2 + H2O = (S)-2-amino-6-oxohexanoyl-[protein] + H2O2 + NH4(+). In terms of biological role, responsible for the post-translational oxidative deamination of peptidyl lysine residues in precursors to fibrous collagen and elastin. Regulator of Ras expression. May play a role in tumor suppression. Plays a role in the aortic wall architecture. This Bos taurus (Bovine) protein is Protein-lysine 6-oxidase.